The sequence spans 1166 residues: Folliculin-interacting protein 1 (1166 aa).

The uDENN FNIP1/2-type domain maps to 37–478; it reads FDPSQIRLIV…TVMPNGQPPI (442 aa). A phosphoserine; by AMPK mark is found at S220, S230, S232, and S261. T294 carries the phosphothreonine modification. At S296 the chain carries Phosphoserine. A cDENN FNIP1/2-type domain is found at 486 to 1092; that stretch reads SSQSVDMLAK…VSNLLHSTLQ (607 aa). Position 593 is a phosphoserine; by AMPK (S593). S594 bears the Phosphoserine mark. 2 residues coordinate Zn(2+): C608 and C610. The Cys degron motif lies at 608–615; the sequence is CNCKYCSH. The interval 611-612 is KY-finger; that stretch reads KY. Zn(2+) contacts are provided by C613 and H615. Phosphoserine is present on residues S760 and S763. 2 disordered regions span residues 781-817 and 912-956; these read TKPL…VSEE and LVPH…HDMT. Basic and acidic residues-rich tracts occupy residues 783 to 805 and 915 to 925; these read PLKE…KDQS and HGDKESSDKKI. The segment at 929–1166 is interaction with HSP90AA1; sequence TEWDIPRNES…HSPYVAQILL (238 aa). S938 carries the post-translational modification Phosphoserine; alternate; by CK2. O-linked (GlcNAc) serine; alternate glycosylation occurs at S938. Residues S939, S941, S946, and S948 each carry the phosphoserine; by CK2 modification. Positions 1102–1157 constitute a dDENN FNIP1/2-type domain; sequence FCVMHLEDRLQELYFKSKMLSEYLRGQMRVHVKELGVVLGIESSDLPLLAAVASTH. Residue K1119 forms a Glycyl lysine isopeptide (Lys-Gly) (interchain with G-Cter in ubiquitin) linkage.

It belongs to the FNIP family. As to quaternary structure, homodimer and homomultimer. Heterodimer and heteromultimer with FNIP2. Interacts with FLCN (via C-terminus). Component of the lysosomal folliculin complex (LFC), composed of FLCN, FNIP1 (or FNIP2), RagA/RRAGA or RagB/RRAGB GDP-bound, RagC/RRAGC or RagD/RRAGD GTP-bound, and Ragulator. Interacts with HSPCA and with the PRKAA1, PRKAB1 and PRKAG1 subunits of 5'-AMP-activated protein kinase (AMPK). Phosphorylated FLCN and AMPK are preferentially bound. Interacts with HSP70, STIP1, PTGES3, CDC37, BRAF, GCR and CDK4. Interacts with HSP90AA1; the interaction inhibits HSP90AA1 ATPase activity. Interacts with ATP2A2. Post-translationally, phosphorylated by AMPK in response to energetic stress. Phosphorylation by AMPK in response to mitochondrial damage promotes inactivation of the non-canonical mTORC1 signaling, nuclear translocation of TFEB and TFE3, inducing transcription of lysosomal or autophagy genes. Sequential phosphorylation by CK2 promotes its gradual interaction with HSP90AA1/Hsp90. Priming phosphorylation at Ser-938 is followed by relay phosphorylation at Ser-939, Ser-941, Ser-946 and Ser-948, promoting its gradual interaction with HSP90AA1/Hsp90. This leads to incremental inhibition of HSP90AA1/Hsp90 ATPase activity and gradual activation of both kinase and non-kinase clients. Dephosphorylated by protein phosphatase 5 (PP5), promoting glycosylation by OGT. In terms of processing, glcNAcylation at Ser-938 by OGT following dephosphorylation by protein phosphatase 5 (PP5) promotes ubiquitination and degradation by the proteasome. Ubiquitinated through 'Lys-11' linkage of ubiquitin moieties at Lys-1119 following glycosylation by OGT, leading to its degradation by the proteasome. Ubiquitinated by the CRL2(FEM1B) complex in response to reductive stress: reductive stress causes reduction of the conserved Cys degron in FNIP1, followed by zinc-binding, zinc acting as a molecular glue for recognition by the CRL2(FEM1B) complex. Ubiquitination leads to FNIP1 degradation, and activation of mitochondria to recalibrate reactive oxygen species (ROS). Post-translationally, oxidation of the Cys degron in normal conditions promotes its stabilization by preventing recognition and ubiquitination by the CRL2(FEM1B) complex. As to expression, strong expression is found in the heart, liver placenta, muscle, nasal mucosa, salivary gland and uvula and moderate expression in kidney and lung. Higher levels detected in clear cell renal cell carcinoma (RCC) and chromophobe RCC than in normal kidney tissue. Expressed in peripheral blood mononuclear cells.

The protein localises to the lysosome membrane. The protein resides in the cytoplasm. It is found in the cytosol. Binding partner of the GTPase-activating protein FLCN: involved in the cellular response to amino acid availability by regulating the non-canonical mTORC1 signaling cascade controlling the MiT/TFE factors TFEB and TFE3. Required to promote FLCN recruitment to lysosomes and interaction with Rag GTPases, leading to activation of the non-canonical mTORC1 signaling. In low-amino acid conditions, component of the lysosomal folliculin complex (LFC) on the membrane of lysosomes, which inhibits the GTPase-activating activity of FLCN, thereby inactivating mTORC1 and promoting nuclear translocation of TFEB and TFE3. Upon amino acid restimulation, disassembly of the LFC complex liberates the GTPase-activating activity of FLCN, leading to activation of mTORC1 and subsequent inactivation of TFEB and TFE3. Together with FLCN, regulates autophagy: following phosphorylation by ULK1, interacts with GABARAP and promotes autophagy. In addition to its role in mTORC1 signaling, also acts as a co-chaperone of HSP90AA1/Hsp90: following gradual phosphorylation by CK2, inhibits the ATPase activity of HSP90AA1/Hsp90, leading to activate both kinase and non-kinase client proteins of HSP90AA1/Hsp90. Acts as a scaffold to load client protein FLCN onto HSP90AA1/Hsp90. Competes with the activating co-chaperone AHSA1 for binding to HSP90AA1, thereby providing a reciprocal regulatory mechanism for chaperoning of client proteins. Also acts as a core component of the reductive stress response by inhibiting activation of mitochondria in normal conditions: in response to reductive stress, the conserved Cys degron is reduced, leading to recognition and polyubiquitylation by the CRL2(FEM1B) complex, followed by proteasomal. Required for B-cell development. This chain is Folliculin-interacting protein 1, found in Homo sapiens (Human).